The primary structure comprises 419 residues: Zinc finger protein Pegasus (419 aa).

Lys-5 is covalently cross-linked (Glycyl lysine isopeptide (Lys-Gly) (interchain with G-Cter in SUMO2)). C2H2-type zinc fingers lie at residues 82 to 104, 110 to 132, and 138 to 161; these read LKCRYCNYASKGTARLIEHIRIH, HRCHLCPFASAYERHLEAHMRSH, and YKCELCSFRCSDRSNLSHHRRRKH. A Glycyl lysine isopeptide (Lys-Gly) (interchain with G-Cter in SUMO2) cross-link involves residue Lys-185. A compositionally biased stretch (polar residues) spans 223–236; it reads QTDSYESMAKTTPT. 2 disordered regions span residues 223 to 245 and 288 to 356; these read QTDSYESMAKTTPTGGLPRDPQE and MQQP…PTLP. A compositionally biased stretch (low complexity) spans 289 to 311; sequence QQPSAQAVVSAVSASLPQSSSPA. A compositionally biased stretch (polar residues) spans 332–349; it reads SEPSAHTSTPSMGNSQPS. 2 consecutive C2H2-type zinc fingers follow at residues 364-386 and 392-416; these read HHCQHCDMYFADNILYTIHMGCH and FQCNICGCKCKNKYDFACHFARGQH.

The protein belongs to the Ikaros C2H2-type zinc-finger protein family. As to quaternary structure, self-associates. Interacts with other family members; IKZF1, IKZF2, IKZF3 and IKZF4.

It localises to the nucleus. Functionally, transcriptional repressor that binds the core 5'GNNTGTNG-3' DNA consensus sequence. Involved in megakaryocyte differentiation. The protein is Zinc finger protein Pegasus (IKZF5) of Bos taurus (Bovine).